The sequence spans 584 residues: UvrABC system protein C (584 aa).

The region spanning 12–89 (NKPGCYLFLN…IKKYRPKYNV (78 aa)) is the GIY-YIG domain. Positions 194–229 (NQVKQTLVKQMQKASDNLQFEQAKRIKDQITSLDFI) constitute a UVR domain.

Belongs to the UvrC family. Interacts with UvrB in an incision complex.

The protein resides in the cytoplasm. The UvrABC repair system catalyzes the recognition and processing of DNA lesions. UvrC both incises the 5' and 3' sides of the lesion. The N-terminal half is responsible for the 3' incision and the C-terminal half is responsible for the 5' incision. The polypeptide is UvrABC system protein C (Mycoplasma capricolum subsp. capricolum (strain California kid / ATCC 27343 / NCTC 10154)).